We begin with the raw amino-acid sequence, 513 residues long: ATP synthase subunit alpha (513 aa).

169 to 176 contributes to the ATP binding site; the sequence is GDRQTGKT.

It belongs to the ATPase alpha/beta chains family. F-type ATPases have 2 components, CF(1) - the catalytic core - and CF(0) - the membrane proton channel. CF(1) has five subunits: alpha(3), beta(3), gamma(1), delta(1), epsilon(1). CF(0) has three main subunits: a(1), b(2) and c(9-12). The alpha and beta chains form an alternating ring which encloses part of the gamma chain. CF(1) is attached to CF(0) by a central stalk formed by the gamma and epsilon chains, while a peripheral stalk is formed by the delta and b chains.

It localises to the cell inner membrane. It carries out the reaction ATP + H2O + 4 H(+)(in) = ADP + phosphate + 5 H(+)(out). Its function is as follows. Produces ATP from ADP in the presence of a proton gradient across the membrane. The alpha chain is a regulatory subunit. The protein is ATP synthase subunit alpha of Edwardsiella ictaluri (strain 93-146).